The following is a 452-amino-acid chain: Ribosomal protein uS12 methylthiotransferase RimO (452 aa).

Residues P5–S116 enclose the MTTase N-terminal domain. [4Fe-4S] cluster-binding residues include C14, C50, C79, C154, C158, and C161. Residues T140–R369 form the Radical SAM core domain. Residues R372–S438 enclose the TRAM domain.

The protein belongs to the methylthiotransferase family. RimO subfamily. It depends on [4Fe-4S] cluster as a cofactor.

The protein localises to the cytoplasm. The enzyme catalyses L-aspartate(89)-[ribosomal protein uS12]-hydrogen + (sulfur carrier)-SH + AH2 + 2 S-adenosyl-L-methionine = 3-methylsulfanyl-L-aspartate(89)-[ribosomal protein uS12]-hydrogen + (sulfur carrier)-H + 5'-deoxyadenosine + L-methionine + A + S-adenosyl-L-homocysteine + 2 H(+). Its function is as follows. Catalyzes the methylthiolation of an aspartic acid residue of ribosomal protein uS12. This Synechococcus sp. (strain ATCC 27144 / PCC 6301 / SAUG 1402/1) (Anacystis nidulans) protein is Ribosomal protein uS12 methylthiotransferase RimO.